Reading from the N-terminus, the 402-residue chain is FMN-dependent alpha-hydroxy acid dehydrogenase qulF (402 aa).

Positions 22–394 (RLPAITTNPT…NRDCMRRISY (373 aa)) constitute an FMN hydroxy acid dehydrogenase domain. Tyr48 is a binding site for a 2-oxocarboxylate. Ser130 and Gln152 together coordinate FMN. A 2-oxocarboxylate-binding residues include Tyr154 and Arg189. Residue Lys265 participates in FMN binding. Catalysis depends on His289, which acts as the Proton acceptor. Position 292 (Arg292) interacts with a 2-oxocarboxylate. FMN contacts are provided by residues 320–324 (DSGVR) and 343–344 (GR).

The protein belongs to the FMN-dependent alpha-hydroxy acid dehydrogenase family. Requires FMN as cofactor.

Functionally, FMN-dependent alpha-hydroxy acid dehydrogenase; part of the gene cluster that mediates the biosynthesis of quinolactacin A2 (QUL A2), a fungal alkaloid that features a quinolone-gamma-lactam hybrid, which is a potential pharmacophore for the treatment of cancer and Alzheimer's disease. The quinolone-gamma-lactam hybrid scaffold is synthesized from the combination of L-isoleucine (L-Ile) and the nonproteinogenic amino acid L-kynurenine, followed by quinolone cyclization, oxidative decarboxylation, and lactam formation. Additionally, the N-methyl group is derived from methionine, which might be catalyzed by an S-adenosylmethionine (SAM)-dependent methyltransferase. Bioconversion of L-tryptophan to L-kynurenine could be catalyzed by the indoleamine-2,3-dioxygenase (IDO) qulI to produce an unstable product, N-formyl-L-kynurenine, followed by kynurenine formamidase catalyzed hydrolysis. QulM then acts as a methyltransferase that methylates L-kynurenine at the N-4 position. The FMN-dependent alpha-hydroxy acid dehydrogenase qulF than functions as an oxidative decarboxylase which converts N-methylkynurenine into 2-aminobenzoylacetamide via 2 tandem reactions, including dehydrogenation and decarboxylation. An amidase located outside of the qul gene cluster further produces the unstable beta-keto acid precursor N-methyl-2-aminobenzoylacetate, which could be spontaneously dehydrated to form N-methyl-4-hydroxy-2-quinolone. The NRPS qulB is able to incorporate N-methyl-2-aminobenzoylacetate and efficiently compete with the spontaneous reaction. By further extending the beta-keto acid with L-Ile, qulA performs a Dieckmann condensation to form the gamma-lactam ring and release a 4-ketopyrrolidinone intermediate from the assembly line. This intermediate could plausibly further undergo a spontaneous cyclization to yield the final quinolone-gamma-lactam hybrid structure. The chain is FMN-dependent alpha-hydroxy acid dehydrogenase qulF from Penicillium citrinum.